The following is a 127-amino-acid chain: Cytochrome c2 (127 aa).

Residues 1–20 (MRKLVFGLFVLAASVAPAAA) form the signal peptide. A Pyrrolidone carboxylic acid modification is found at Q21. Heme c contacts are provided by C33, C36, H37, and M99.

It belongs to the cytochrome c family. Binds 1 heme c group covalently per subunit.

In terms of biological role, cytochrome c2 is found mainly in purple, non-sulfur, photosynthetic bacteria where it functions as the electron donor to the oxidized bacteriochlorophyll in the photophosphorylation pathway. However, it may also have a role in the respiratory chain and is found in some non-photosynthetic bacteria. The sequence is that of Cytochrome c2 (cycA) from Blastochloris viridis (Rhodopseudomonas viridis).